A 63-amino-acid polypeptide reads, in one-letter code: Hirudin (63 aa).

Residues 1 to 3 form an interaction with thrombin active site region; that stretch reads VVY. 3 disulfides stabilise this stretch: Cys6–Cys14, Cys16–Cys28, and Cys22–Cys39. The disordered stretch occupies residues 39–63; it reads CVTGEGTPGPQSHNDGDFEEPEEYL. O-linked (GalNAc...) threonine glycosylation is present at Thr45. Positions 55–63 are interaction with fibrinogen-binding exosite of thrombin; it reads DFEEPEEYL. Position 62 is a sulfotyrosine (Tyr62).

Belongs to the protease inhibitor I14 (hirudin) family.

Its subcellular location is the secreted. Its function is as follows. Hirudin is a potent thrombin-specific protease inhibitor. It forms a stable non-covalent complex with alpha-thrombin, thereby abolishing its ability to cleave fibrinogen. The polypeptide is Hirudin (Poecilobdella viridis (Indian freshwater leech)).